Consider the following 180-residue polypeptide: Segregation and condensation protein B (180 aa).

The protein belongs to the ScpB family. Homodimer. Homodimerization may be required to stabilize the binding of ScpA to the Smc head domains. Component of a cohesin-like complex composed of ScpA, ScpB and the Smc homodimer, in which ScpA and ScpB bind to the head domain of Smc. The presence of the three proteins is required for the association of the complex with DNA.

It localises to the cytoplasm. Participates in chromosomal partition during cell division. May act via the formation of a condensin-like complex containing Smc and ScpA that pull DNA away from mid-cell into both cell halves. The protein is Segregation and condensation protein B of Staphylococcus epidermidis (strain ATCC 35984 / DSM 28319 / BCRC 17069 / CCUG 31568 / BM 3577 / RP62A).